A 187-amino-acid polypeptide reads, in one-letter code: Peptide deformylase (187 aa).

Fe cation is bound by residues C94 and H136. E137 is an active-site residue. A Fe cation-binding site is contributed by H140.

The protein belongs to the polypeptide deformylase family. Requires Fe(2+) as cofactor.

It carries out the reaction N-terminal N-formyl-L-methionyl-[peptide] + H2O = N-terminal L-methionyl-[peptide] + formate. Functionally, removes the formyl group from the N-terminal Met of newly synthesized proteins. Requires at least a dipeptide for an efficient rate of reaction. N-terminal L-methionine is a prerequisite for activity but the enzyme has broad specificity at other positions. In Chlorobaculum tepidum (strain ATCC 49652 / DSM 12025 / NBRC 103806 / TLS) (Chlorobium tepidum), this protein is Peptide deformylase.